We begin with the raw amino-acid sequence, 62 residues long: Sperm protamine P1 (62 aa).

The interval 1-62 (MARYRRRSRS…RYSRRGRRRY (62 aa)) is disordered.

Belongs to the protamine P1 family. Testis.

The protein localises to the nucleus. Its subcellular location is the chromosome. Protamines substitute for histones in the chromatin of sperm during the haploid phase of spermatogenesis. They compact sperm DNA into a highly condensed, stable and inactive complex. In Sarcophilus harrisii (Tasmanian devil), this protein is Sperm protamine P1 (PRM1).